The following is a 292-amino-acid chain: G1/S-specific cyclin-D3 (292 aa).

Positions 27 to 152 constitute a Cyclin N-terminal domain; that stretch reads VLQSLLRLEE…LVLGKLKWDL (126 aa). Residues 255-292 form a disordered region; sequence LREAAQTSPSPAPKAPRGSSSQGPSQTSTPTDVTAIHL. Phosphoserine is present on residues Ser-264 and Ser-279. The segment covering 272 to 285 has biased composition (low complexity); the sequence is GSSSQGPSQTSTPT. Thr-283 carries the post-translational modification Phosphothreonine.

It belongs to the cyclin family. Cyclin D subfamily. As to quaternary structure, interacts with the CDK4 and CDK6 protein kinases to form a serine/threonine kinase holoenzyme complex. The cyclin subunit imparts substrate specificity to the complex. Interacts with ATF5. Interacts with EIF3K. Component of the ternary complex cyclin D/CDK4/CDKN1B required for nuclear translocation and modulation of CDK4-mediated kinase activity. Can form similar complexes with either CDKN1A or CDKN2A. In terms of processing, phosphorylation at Thr-283 by MAP kinases is required for ubiquitination and degradation by the DCX(AMBRA1) complex. Post-translationally, ubiquitinated by the DCX(AMBRA1) complex during the transition from G1 to S cell phase, leading to its degradation: ubiquitination is dependent on Thr-283 phosphorylation. The DCX(AMBRA1) complex represents the major regulator of CCND3 stability during the G1/S transition. Polyubiquitinated by the SCF(FBXL2) complex, leading to proteasomal degradation.

It localises to the nucleus. Its subcellular location is the cytoplasm. Its function is as follows. Regulatory component of the cyclin D3-CDK4 (DC) complex that phosphorylates and inhibits members of the retinoblastoma (RB) protein family including RB1 and regulates the cell-cycle during G(1)/S transition. Phosphorylation of RB1 allows dissociation of the transcription factor E2F from the RB/E2F complex and the subsequent transcription of E2F target genes which are responsible for the progression through the G(1) phase. Hypophosphorylates RB1 in early G(1) phase. Cyclin D-CDK4 complexes are major integrators of various mitogenenic and antimitogenic signals. Component of the ternary complex, cyclin D3/CDK4/CDKN1B, required for nuclear translocation and activity of the cyclin D-CDK4 complex. Shows transcriptional coactivator activity with ATF5 independently of CDK4. This is G1/S-specific cyclin-D3 (CCND3) from Bos taurus (Bovine).